The following is a 250-amino-acid chain: MRVDLNCDLGEAFGNYSFGGDHQIIPLITSANVACGFHAGDENVMNETVKLAKAHNVAVGAHPGLPDLKGFGRRNIDISNEEIYNLMIYQLGALQGFCRIHQVKINHVKPHGALYQMGAKDREIASVIAQAVYDFDPSLVLVGLANSYLISEAKNVGLITASEVFADRRYEDDGQLVSRKESDAVITDTDEALKQVLKMVKENKVISKNNKEVTLQADTICVHGDGEHALLFVSKIREILMKEGIDIQSL.

The protein belongs to the LamB/PxpA family. Forms a complex composed of PxpA, PxpB and PxpC.

It catalyses the reaction 5-oxo-L-proline + ATP + 2 H2O = L-glutamate + ADP + phosphate + H(+). Functionally, catalyzes the cleavage of 5-oxoproline to form L-glutamate coupled to the hydrolysis of ATP to ADP and inorganic phosphate. This Staphylococcus aureus (strain bovine RF122 / ET3-1) protein is 5-oxoprolinase subunit A.